Consider the following 666-residue polypeptide: Sodium/potassium/calcium exchanger 2 (666 aa).

The Cytoplasmic segment spans residues 1-38; that stretch reads MDLHQSPTARLLQKWCSHESPFGCRRHYNSRKKLKLIR. The chain crosses the membrane as a helical span at residues 39–59; sequence VIGLVMGLVAVSTVPFSISAF. Topologically, residues 60 to 133 are extracellular; sequence TETDSQSNRG…DIFSLEERRK (74 aa). Residues 63–122 form a disordered region; the sequence is DSQSNRGEASDMSGPRVAQGHRQRTLLDLNDKIRDYTPQPPASQEDQAENSTEHTQGDYP. N-linked (GlcNAc...) asparagine glycosylation is present at asparagine 112. The span at 113–122 shows a compositional bias: basic and acidic residues; sequence STEHTQGDYP. The helical transmembrane segment at 134 to 154 threads the bilayer; sequence GAIILHVIGMIYMFIALAIVC. At 155-179 the chain is on the cytoplasmic side; sequence DEFFVPSLTVITEKLGISDDVAGAT. An Alpha-1 repeat occupies 175–215; the sequence is VAGATFMAAGGSAPELFTSLIGVFIAHSNVGIGTIVGSAVF. The helical transmembrane segment at 180-200 threads the bilayer; sequence FMAAGGSAPELFTSLIGVFIA. Residues 201-205 are Extracellular-facing; that stretch reads HSNVG. The chain crosses the membrane as a helical span at residues 206–226; it reads IGTIVGSAVFNILFVIGMCAL. The Cytoplasmic portion of the chain corresponds to 227–237; that stretch reads FSREILNLTWW. Residues 238–258 form a helical membrane-spanning segment; sequence PLFRDVSFYIVDLLMLITFFL. The Extracellular portion of the chain corresponds to 259-260; the sequence is DN. Residues 261–281 traverse the membrane as a helical segment; the sequence is VIMWWESLLLLTAYFAYVVFM. The Cytoplasmic segment spans residues 282 to 502; that stretch reads KFNVQVERWV…PDVRKPASRK (221 aa). The segment at 311–336 is disordered; it reads KSPTAGDKDGPTLPSKPRLQRGGSSA. 2 positions are modified to phosphoserine: serine 337 and serine 341. The tract at residues 397–467 is disordered; the sequence is VDENERQNGA…EEDDQPLSLS (71 aa). Polar residues predominate over residues 416–442; the sequence is PNSTSTEVEMTPSSEASEPVQNGNLSH. A helical membrane pass occupies residues 503 to 523; it reads FFPITFFGSITWIAVFSYLMV. The Extracellular segment spans residues 524 to 538; it reads WWAHQVGETIGISEE. A helical transmembrane segment spans residues 539-559; that stretch reads IMGLTILAAGTSIPDLITSVI. An Alpha-2 repeat occupies 546 to 577; that stretch reads AAGTSIPDLITSVIVARKGLGDMAVSSSVGSN. At 560–574 the chain is on the cytoplasmic side; it reads VARKGLGDMAVSSSV. A helical membrane pass occupies residues 575-595; that stretch reads GSNIFDITVGLPLPWLLYTII. Topologically, residues 596–607 are extracellular; sequence HRFSPVTVSSNG. The chain crosses the membrane as a helical span at residues 608-628; it reads LFCAIVLLFIMLLFVILSIAL. Over 629-635 the chain is Cytoplasmic; the sequence is CKWRMNK. A helical membrane pass occupies residues 636-656; it reads ILGFIMFGLYFVFLVVSVLLE. At 657-666 the chain is on the extracellular side; it reads DKVLVCPVSI.

It belongs to the Ca(2+):cation antiporter (CaCA) (TC 2.A.19) family. SLC24A subfamily.

The protein localises to the cell membrane. It catalyses the reaction Ca(2+)(out) + K(+)(out) + 4 Na(+)(in) = Ca(2+)(in) + K(+)(in) + 4 Na(+)(out). Calcium, potassium:sodium antiporter that transports 1 Ca(2+) and 1 K(+) in exchange for 4 Na(+). Required for learming and memory by regulating neuronal Ca(2+), which is essential for the development of synaptic plasticity. This Mus musculus (Mouse) protein is Sodium/potassium/calcium exchanger 2.